The primary structure comprises 229 residues: 3-isopropylmalate dehydratase small subunit (229 aa).

A disordered region spans residues 208 to 229 (KIESAREPDDDWTGPLADRGII).

Belongs to the LeuD family. LeuD type 1 subfamily. Heterodimer of LeuC and LeuD.

The enzyme catalyses (2R,3S)-3-isopropylmalate = (2S)-2-isopropylmalate. The protein operates within amino-acid biosynthesis; L-leucine biosynthesis; L-leucine from 3-methyl-2-oxobutanoate: step 2/4. Catalyzes the isomerization between 2-isopropylmalate and 3-isopropylmalate, via the formation of 2-isopropylmaleate. The protein is 3-isopropylmalate dehydratase small subunit of Bifidobacterium longum subsp. infantis (strain ATCC 15697 / DSM 20088 / JCM 1222 / NCTC 11817 / S12).